We begin with the raw amino-acid sequence, 151 residues long: UPF0178 protein RD1_0321 (151 aa).

The protein belongs to the UPF0178 family.

The chain is UPF0178 protein RD1_0321 from Roseobacter denitrificans (strain ATCC 33942 / OCh 114) (Erythrobacter sp. (strain OCh 114)).